A 307-amino-acid chain; its full sequence is Acetyl-coenzyme A carboxylase carboxyl transferase subunit beta (307 aa).

Positions 1–26 (MAMAEPQDPKKGDKKTAERRGGGWLS) are disordered. Positions 7-21 (QDPKKGDKKTAERRG) are enriched in basic and acidic residues. Positions 45-307 (LWVKCPDTGE…LMMGRKRQAA (263 aa)) constitute a CoA carboxyltransferase N-terminal domain.

The protein belongs to the AccD/PCCB family. As to quaternary structure, acetyl-CoA carboxylase is a heterohexamer composed of biotin carboxyl carrier protein (AccB), biotin carboxylase (AccC) and two subunits each of ACCase subunit alpha (AccA) and ACCase subunit beta (AccD).

It is found in the cytoplasm. The catalysed reaction is N(6)-carboxybiotinyl-L-lysyl-[protein] + acetyl-CoA = N(6)-biotinyl-L-lysyl-[protein] + malonyl-CoA. It participates in lipid metabolism; malonyl-CoA biosynthesis; malonyl-CoA from acetyl-CoA: step 1/1. In terms of biological role, component of the acetyl coenzyme A carboxylase (ACC) complex. Biotin carboxylase (BC) catalyzes the carboxylation of biotin on its carrier protein (BCCP) and then the CO(2) group is transferred by the transcarboxylase to acetyl-CoA to form malonyl-CoA. In Caulobacter vibrioides (strain ATCC 19089 / CIP 103742 / CB 15) (Caulobacter crescentus), this protein is Acetyl-coenzyme A carboxylase carboxyl transferase subunit beta.